A 93-amino-acid chain; its full sequence is Small ribosomal subunit protein uS19 (93 aa).

This sequence belongs to the universal ribosomal protein uS19 family.

Its function is as follows. Protein S19 forms a complex with S13 that binds strongly to the 16S ribosomal RNA. The polypeptide is Small ribosomal subunit protein uS19 (Streptococcus gordonii (strain Challis / ATCC 35105 / BCRC 15272 / CH1 / DL1 / V288)).